Here is a 345-residue protein sequence, read N- to C-terminus: N-acetyl-gamma-glutamyl-phosphate reductase (345 aa).

C149 is a catalytic residue.

Belongs to the NAGSA dehydrogenase family. Type 1 subfamily.

It is found in the cytoplasm. It catalyses the reaction N-acetyl-L-glutamate 5-semialdehyde + phosphate + NADP(+) = N-acetyl-L-glutamyl 5-phosphate + NADPH + H(+). The protein operates within amino-acid biosynthesis; L-arginine biosynthesis; N(2)-acetyl-L-ornithine from L-glutamate: step 3/4. In terms of biological role, catalyzes the NADPH-dependent reduction of N-acetyl-5-glutamyl phosphate to yield N-acetyl-L-glutamate 5-semialdehyde. The polypeptide is N-acetyl-gamma-glutamyl-phosphate reductase (Bacillus cereus (strain B4264)).